The chain runs to 212 residues: NAD(P)H-quinone oxidoreductase subunit K, chloroplastic (212 aa).

Residues cysteine 43, cysteine 44, cysteine 108, and cysteine 139 each coordinate [4Fe-4S] cluster.

This sequence belongs to the complex I 20 kDa subunit family. NDH is composed of at least 16 different subunits, 5 of which are encoded in the nucleus. [4Fe-4S] cluster serves as cofactor.

The protein resides in the plastid. It is found in the chloroplast thylakoid membrane. It catalyses the reaction a plastoquinone + NADH + (n+1) H(+)(in) = a plastoquinol + NAD(+) + n H(+)(out). The enzyme catalyses a plastoquinone + NADPH + (n+1) H(+)(in) = a plastoquinol + NADP(+) + n H(+)(out). Functionally, NDH shuttles electrons from NAD(P)H:plastoquinone, via FMN and iron-sulfur (Fe-S) centers, to quinones in the photosynthetic chain and possibly in a chloroplast respiratory chain. The immediate electron acceptor for the enzyme in this species is believed to be plastoquinone. Couples the redox reaction to proton translocation, and thus conserves the redox energy in a proton gradient. This Phaseolus vulgaris (Kidney bean) protein is NAD(P)H-quinone oxidoreductase subunit K, chloroplastic.